The following is a 235-amino-acid chain: Leucyl/phenylalanyl-tRNA--protein transferase (235 aa).

The protein belongs to the L/F-transferase family.

The protein resides in the cytoplasm. It carries out the reaction N-terminal L-lysyl-[protein] + L-leucyl-tRNA(Leu) = N-terminal L-leucyl-L-lysyl-[protein] + tRNA(Leu) + H(+). The enzyme catalyses N-terminal L-arginyl-[protein] + L-leucyl-tRNA(Leu) = N-terminal L-leucyl-L-arginyl-[protein] + tRNA(Leu) + H(+). The catalysed reaction is L-phenylalanyl-tRNA(Phe) + an N-terminal L-alpha-aminoacyl-[protein] = an N-terminal L-phenylalanyl-L-alpha-aminoacyl-[protein] + tRNA(Phe). Functionally, functions in the N-end rule pathway of protein degradation where it conjugates Leu, Phe and, less efficiently, Met from aminoacyl-tRNAs to the N-termini of proteins containing an N-terminal arginine or lysine. The polypeptide is Leucyl/phenylalanyl-tRNA--protein transferase (Aeromonas hydrophila subsp. hydrophila (strain ATCC 7966 / DSM 30187 / BCRC 13018 / CCUG 14551 / JCM 1027 / KCTC 2358 / NCIMB 9240 / NCTC 8049)).